The chain runs to 142 residues: Hemoglobin subunit alpha (142 aa).

The region spanning 2-142 is the Globin domain; it reads VLSPDDKKHV…VSTVLTSKYR (141 aa). Ser-4 carries the phosphoserine modification. Residues Lys-8 and Lys-12 each carry the N6-succinyllysine modification. Residue Lys-17 is modified to N6-acetyllysine; alternate. N6-succinyllysine; alternate is present on Lys-17. Tyr-25 is modified (phosphotyrosine). Phosphoserine is present on Ser-36. Lys-41 is modified (N6-succinyllysine). At Ser-50 the chain carries Phosphoserine. His-59 is a binding site for O2. Residue His-88 coordinates heme b. A Phosphoserine modification is found at Ser-103. Phosphothreonine is present on Thr-109. Phosphoserine occurs at positions 125 and 132. Phosphothreonine occurs at positions 135 and 138. Residue Ser-139 is modified to Phosphoserine.

The protein belongs to the globin family. Heterotetramer of two alpha chains and two beta chains. Red blood cells.

Its function is as follows. Involved in oxygen transport from the lung to the various peripheral tissues. Functionally, hemopressin acts as an antagonist peptide of the cannabinoid receptor CNR1. Hemopressin-binding efficiently blocks cannabinoid receptor CNR1 and subsequent signaling. This chain is Hemoglobin subunit alpha (HBA), found in Papio anubis (Olive baboon).